Consider the following 253-residue polypeptide: Phosphate import ATP-binding protein PstB (253 aa).

In terms of domain architecture, ABC transporter spans 5 to 248 (IETINLHVYY…PEHELTEKYV (244 aa)). 37-44 (GPSGCGKS) serves as a coordination point for ATP.

This sequence belongs to the ABC transporter superfamily. Phosphate importer (TC 3.A.1.7) family. As to quaternary structure, the complex is composed of two ATP-binding proteins (PstB), two transmembrane proteins (PstC and PstA) and a solute-binding protein (PstS).

The protein localises to the cell membrane. The enzyme catalyses phosphate(out) + ATP + H2O = ADP + 2 phosphate(in) + H(+). Functionally, part of the ABC transporter complex PstSACB involved in phosphate import. Responsible for energy coupling to the transport system. This Pyrococcus furiosus (strain ATCC 43587 / DSM 3638 / JCM 8422 / Vc1) protein is Phosphate import ATP-binding protein PstB.